Consider the following 419-residue polypeptide: Protein arginine N-methyltransferase 8-B (419 aa).

Over residues 1–14 (MGLRHSSRCLLLRR) the composition is skewed to basic residues. The tract at residues 1 to 79 (MGLRHSSRCL…HTPHVSALSA (79 aa)) is disordered. Glycine 2 carries the N-myristoyl glycine lipid modification. Over residues 33–63 (QHQQQQSISSIPSSQSLQPSPLPKPVTSVHH) the composition is skewed to low complexity. Omega-N-methylarginine is present on arginine 83. The residue at position 98 (arginine 98) is an Asymmetric dimethylarginine. Positions 98 to 402 (RDYYFDSYAH…RDLDFTFELD (305 aa)) constitute an SAM-dependent MTase PRMT-type domain. S-adenosyl-L-methionine contacts are provided by residues histidine 111, arginine 120, glycine 144, 144-147 (GSGT), glutamate 166, and glutamate 195. Residues glutamate 210 and glutamate 219 contribute to the active site.

It belongs to the class I-like SAM-binding methyltransferase superfamily. Protein arginine N-methyltransferase family. PRMT8 subfamily. In terms of assembly, homodimer. Tetramer; individual homodimers associates to form a homotetramer. Homooctamer; individual homodimers associates to form a homooctamer and homooligomerization is required for proper localization to the cell membrane.

It localises to the cell membrane. It catalyses the reaction L-arginyl-[protein] + S-adenosyl-L-methionine = N(omega)-methyl-L-arginyl-[protein] + S-adenosyl-L-homocysteine + H(+). The catalysed reaction is L-arginyl-[protein] + 2 S-adenosyl-L-methionine = N(omega),N(omega)-dimethyl-L-arginyl-[protein] + 2 S-adenosyl-L-homocysteine + 2 H(+). Functionally, S-adenosyl-L-methionine-dependent and membrane-associated arginine methyltransferase that can both catalyze the formation of omega-N monomethylarginine (MMA) and asymmetrical dimethylarginine (aDMA). This Danio rerio (Zebrafish) protein is Protein arginine N-methyltransferase 8-B (prmt8b).